Reading from the N-terminus, the 337-residue chain is Ketol-acid reductoisomerase (NADP(+)) (337 aa).

Positions 1-180 (MQVYYDKDAD…GGTKGGVIET (180 aa)) constitute a KARI N-terminal Rossmann domain. NADP(+) contacts are provided by residues 24–27 (YGSQ), Arg47, and Ser51. His106 is an active-site residue. Gly132 lines the NADP(+) pocket. A KARI C-terminal knotted domain is found at 181 to 326 (TFREETETDL…AQLRAMMPWI (146 aa)). Mg(2+) contacts are provided by Asp189, Glu193, Glu225, and Glu229. Ser250 is a substrate binding site.

Belongs to the ketol-acid reductoisomerase family. It depends on Mg(2+) as a cofactor.

It catalyses the reaction (2R)-2,3-dihydroxy-3-methylbutanoate + NADP(+) = (2S)-2-acetolactate + NADPH + H(+). It carries out the reaction (2R,3R)-2,3-dihydroxy-3-methylpentanoate + NADP(+) = (S)-2-ethyl-2-hydroxy-3-oxobutanoate + NADPH + H(+). Its pathway is amino-acid biosynthesis; L-isoleucine biosynthesis; L-isoleucine from 2-oxobutanoate: step 2/4. It participates in amino-acid biosynthesis; L-valine biosynthesis; L-valine from pyruvate: step 2/4. Functionally, involved in the biosynthesis of branched-chain amino acids (BCAA). Catalyzes an alkyl-migration followed by a ketol-acid reduction of (S)-2-acetolactate (S2AL) to yield (R)-2,3-dihydroxy-isovalerate. In the isomerase reaction, S2AL is rearranged via a Mg-dependent methyl migration to produce 3-hydroxy-3-methyl-2-ketobutyrate (HMKB). In the reductase reaction, this 2-ketoacid undergoes a metal-dependent reduction by NADPH to yield (R)-2,3-dihydroxy-isovalerate. The chain is Ketol-acid reductoisomerase (NADP(+)) from Neisseria meningitidis serogroup A / serotype 4A (strain DSM 15465 / Z2491).